Consider the following 66-residue polypeptide: LTCVTSKSIFGITTENCPDGQNLCFKKWYYLNHRYSDITWGCAATCPKPTNVRETIHCCETDKCNE.

4 cysteine pairs are disulfide-bonded: C3/C24, C17/C42, C46/C58, and C59/C64.

The protein belongs to the three-finger toxin family. Short-chain subfamily. Aminergic toxin sub-subfamily. Expressed by the venom gland.

It localises to the secreted. Its function is as follows. Selectively binds with high-affinity to the a2B-adrenoceptor subtype (ADRA2B). The toxin reversibly binds to ADRA2B, and its mode of inhibition is non-competitive. The toxin has also been described to bind with high affinity to all muscarinic receptor subtypes (Ki=23 nM (on CHRM1), Ki=44 nM (on CHRM2), Ki=3 nM (on CHRM3), Ki=5 nM (on CHRM4), and Ki=8 nM (on CHRM5)) but no other data support these affinity values. The polypeptide is Muscarinic toxin alpha (Dendroaspis polylepis polylepis (Black mamba)).